Consider the following 765-residue polypeptide: Amine oxidase [copper-containing] 3 (765 aa).

The Cytoplasmic portion of the chain corresponds to M1 to T6. Residues L7–G27 traverse the membrane as a helical; Signal-anchor for type II membrane protein segment. Residues R28 to N765 lie on the Extracellular side of the membrane. A glycan (N-linked (GlcNAc...) asparagine) is linked at N137. C198 and C199 are joined by a disulfide. N232 and N294 each carry an N-linked (GlcNAc...) asparagine glycan. The Proton acceptor role is filled by D386. A disulfide bond links C404 and C430. Y471 functions as the Schiff-base intermediate with substrate; via topaquinone in the catalytic mechanism. Position 471 is a 2',4',5'-topaquinone (Y471). Residues H520 and H522 each coordinate Cu(2+). The Ca(2+) site is built by D529, L530, D531, and E572. N-linked (GlcNAc...) asparagine glycosylation occurs at N592. E641 is a Ca(2+) binding site. N-linked (GlcNAc...) asparagine glycosylation is present at N659. F663 is a binding site for Ca(2+). N-linked (GlcNAc...) asparagine glycosylation occurs at N666. Residues E667, D673, and L674 each contribute to the Ca(2+) site. A Cu(2+)-binding site is contributed by H684. C734 and C741 are joined by a disulfide.

Belongs to the copper/topaquinone oxidase family. As to quaternary structure, homodimer; disulfide-linked. Probably forms heterodimers with AOC2. The cofactor is Cu(2+). Ca(2+) is required as a cofactor. It depends on L-topaquinone as a cofactor. Post-translationally, topaquinone (TPQ) is generated by copper-dependent autoxidation of a specific tyrosyl residue. N- and O-glycosylated.

It is found in the cell membrane. The catalysed reaction is methylamine + O2 + H2O = formaldehyde + H2O2 + NH4(+). It carries out the reaction benzylamine + O2 + H2O = benzaldehyde + H2O2 + NH4(+). It catalyses the reaction 2-phenylethylamine + O2 + H2O = 2-phenylacetaldehyde + H2O2 + NH4(+). Functionally, catalyzes the oxidative deamination of primary amines to the corresponding aldehydes with the concomitant production of hydrogen peroxide and ammonia. Has a preference for the primary monoamines methylamine and benzylamine. Could also act on 2-phenylethylamine but much less efficiently. At endothelial cells surface can also function as a cell adhesion protein that participates in lymphocyte extravasation and recirculation by mediating the binding of lymphocytes to peripheral lymph node vascular endothelial cells in an L-selectin-independent fashion. The polypeptide is Amine oxidase [copper-containing] 3 (Mus musculus (Mouse)).